Consider the following 698-residue polypeptide: UV radiation resistance-associated protein (698 aa).

Low complexity predominate over residues 1–10; the sequence is MSSCASLGGP. Residues 1-21 are disordered; that stretch reads MSSCASLGGPVPLPPPGPSAA. Residues 23–149 form the C2 domain; sequence TSGAPARALH…YLGQQIHARN (127 aa). The segment at 199–268 is sufficient for interaction with STX7; VTI1B AND STX8; sequence HRAQCAIKQT…REVAFLHKQQ (70 aa). Positions 200–304 form a coiled coil; that stretch reads RAQCAIKQTQ…LRKECTAKRE (105 aa). Residues 269-441 form a sufficient for interaction with VPS16, required for interaction with CEP63 region; it reads MALQDKGSAF…IAQLRYQHGL (173 aa). Residues 442-698 are required for interaction with PRKDC, XRCC6 and XRCC5; it reads GTPDLRQTLP…FRRPRRSSDK (257 aa). 2 disordered regions span residues 477–551 and 565–586; these read PKRQ…SSLD and VDLG…EQGE. Serine 492 carries the phosphoserine modification. Serine 497 bears the Phosphoserine; by MTOR mark. The residue at position 507 (serine 507) is a Phosphoserine. Phosphothreonine is present on threonine 517. Serine 521, serine 548, serine 549, serine 570, and serine 688 each carry phosphoserine.

As to quaternary structure, component of the PI3K (PI3KC3/PI3K-III/class III phosphatidylinositol 3-kinase) complex II (PI3KC3-C2) in which the core composed of the catalytic subunit PIK3C3, the regulatory subunit PIK3R4 and BECN1 is associated with UVRAG; in the complex interacts directly with BECN1. PI3KC3-C2 can associate with further regulatory subunits such as RUBCN and probably SH3GLB1/Bif-1. Interacts with SH3GLB1; UVRAG bridges the interaction to BECN1 indicative for an association with the PI3K complex PI3KC3-C2. Interacts with RINT1. Associates with the NRZ complex under basal conditions and dissociates from it under autophagy conditions to associate with the PI3K complex; these complex associations seem to be mutually exclusive. Interacts with VPS16; VPS11; VPS18; VPS33 (VPS33A or VPS33B) and VPS39; indicative for an association with a class C Vps tethering complex (possibly the HOPS complex). Interacts with RAB7A; RAB7A competes with UVRAG for RUBCN binding. Interacts with STX7, VTI1B, STX8. Interacts with PRKDC, XRCC6 and XRCC5; indicative for an association with the DNA-dependent protein kinase complex DNA-PK. Interacts with CEP63. Directly interacts with FEZ1 and SCOC; the interaction with SCOC is reduced by amino acid starvation, but the complex is stabilized in the presence of FEZ1. Interacts with BECN1P1/BECN2. Interacts with SLAMF1. Interacts with RUBCNL/PACER; promoting targeting of UVRAG to autophagosome. Interacts with WNK1. In terms of processing, phosphorylated at Ser-497 by MTOR under basal conditions; increases the interaction with RUBCN implicated in inhibitory effect of RUBCN on PI3KC3 and decreases interaction with RAB7A, and VPS16 and VPS39 (indicative for a class C Vps complex, possibly the HOPS complex).

The protein resides in the late endosome. It is found in the lysosome. Its subcellular location is the cytoplasmic vesicle. It localises to the autophagosome. The protein localises to the early endosome. The protein resides in the endoplasmic reticulum. It is found in the midbody. Its subcellular location is the chromosome. It localises to the centromere. Its function is as follows. Versatile protein that is involved in regulation of different cellular pathways implicated in membrane trafficking. Involved in regulation of the COPI-dependent retrograde transport from Golgi and the endoplasmic reticulum by associating with the NRZ complex; the function is dependent on its binding to phosphatidylinositol 3-phosphate (PtdIns(3)P). During autophagy acts as a regulatory subunit of the alternative PI3K complex II (PI3KC3-C2) that mediates formation of phosphatidylinositol 3-phosphate and is believed to be involved in maturation of autophagosomes and endocytosis. Activates lipid kinase activity of PIK3C3. Involved in the regulation of degradative endocytic trafficking and cytokinesis, and in regulation of ATG9A transport from the Golgi to the autophagosome; the functions seems to implicate its association with PI3KC3-C2. Involved in maturation of autophagosomes and degradative endocytic trafficking independently of BECN1 but depending on its association with a class C Vps complex (possibly the HOPS complex); the association is also proposed to promote autophagosome recruitment and activation of Rab7 and endosome-endosome fusion events. Enhances class C Vps complex (possibly HOPS complex) association with a SNARE complex and promotes fusogenic SNARE complex formation during late endocytic membrane fusion. In case of negative-strand RNA virus infection is required for efficient virus entry, promotes endocytic transport of virions and is implicated in a VAMP8-specific fusogenic SNARE complex assembly. Involved in maintaining chromosomal stability. Promotes DNA double-strand break (DSB) repair by association with DNA-dependent protein kinase complex DNA-PK and activating it in non-homologous end joining (NHEJ). Required for centrosome stability and proper chromosome segregation. The protein is UV radiation resistance-associated protein (Uvrag) of Mus musculus (Mouse).